Here is a 210-residue protein sequence, read N- to C-terminus: Thymidylate kinase (210 aa).

10-17 provides a ligand contact to ATP; that stretch reads GPEGAGKS.

The protein belongs to the thymidylate kinase family.

The enzyme catalyses dTMP + ATP = dTDP + ADP. In terms of biological role, phosphorylation of dTMP to form dTDP in both de novo and salvage pathways of dTTP synthesis. In Pseudomonas fluorescens (strain ATCC BAA-477 / NRRL B-23932 / Pf-5), this protein is Thymidylate kinase.